Reading from the N-terminus, the 72-residue chain is Translational regulator CsrA (72 aa).

The protein belongs to the CsrA/RsmA family. In terms of assembly, homodimer; the beta-strands of each monomer intercalate to form a hydrophobic core, while the alpha-helices form wings that extend away from the core.

The protein resides in the cytoplasm. In terms of biological role, a translational regulator that binds mRNA to regulate translation initiation and/or mRNA stability. Usually binds in the 5'-UTR at or near the Shine-Dalgarno sequence preventing ribosome-binding, thus repressing translation. Its main target seems to be the major flagellin gene, while its function is anatagonized by FliW. In Clostridium botulinum (strain Loch Maree / Type A3), this protein is Translational regulator CsrA.